The primary structure comprises 341 residues: tRNA N6-adenosine threonylcarbamoyltransferase (341 aa).

2 residues coordinate Fe cation: histidine 115 and histidine 119. Substrate-binding positions include 137–141, aspartate 170, glycine 183, aspartate 187, and asparagine 276; that span reads IVSGG. Aspartate 304 is a binding site for Fe cation.

It belongs to the KAE1 / TsaD family. It depends on Fe(2+) as a cofactor.

It is found in the cytoplasm. It carries out the reaction L-threonylcarbamoyladenylate + adenosine(37) in tRNA = N(6)-L-threonylcarbamoyladenosine(37) in tRNA + AMP + H(+). Required for the formation of a threonylcarbamoyl group on adenosine at position 37 (t(6)A37) in tRNAs that read codons beginning with adenine. Is involved in the transfer of the threonylcarbamoyl moiety of threonylcarbamoyl-AMP (TC-AMP) to the N6 group of A37, together with TsaE and TsaB. TsaD likely plays a direct catalytic role in this reaction. The chain is tRNA N6-adenosine threonylcarbamoyltransferase from Staphylococcus aureus (strain Mu3 / ATCC 700698).